Reading from the N-terminus, the 208-residue chain is uncharacterized protein (208 aa).

Disordered regions lie at residues 1 to 78 (MDLF…SPTE) and 154 to 208 (RRRS…PRNY). Positions 40 to 51 (KNHKKAQPRRTT) are enriched in basic residues. A compositionally biased stretch (polar residues) spans 179–197 (ANSSSPNPTATGSETSYGS).

This is an uncharacterized protein from Caenorhabditis elegans.